The following is a 399-amino-acid chain: uncharacterized protein (399 aa).

This is an uncharacterized protein from Aquifex aeolicus (strain VF5).